The primary structure comprises 121 residues: Histone H2B (121 aa).

Residues 1 to 27 (MAPKKAPAAAEKKVKKAPTTEKKNKKK) are disordered. Ala-2 bears the N,N,N-trimethylalanine mark. An N6-acetyllysine mark is found at Lys-5 and Lys-41. A Glycyl lysine isopeptide (Lys-Gly) (interchain with G-Cter in ubiquitin) cross-link involves residue Lys-115.

This sequence belongs to the histone H2B family. As to quaternary structure, the nucleosome is a histone octamer containing two molecules each of H2A, H2B, H3 and H4 assembled in one H3-H4 heterotetramer and two H2A-H2B heterodimers. The octamer wraps approximately 147 bp of DNA. Post-translationally, monoubiquitination of Lys-115 gives a specific tag for epigenetic transcriptional activation and is also prerequisite for histone H3 'Lys-4' and 'Lys-79' methylation. In terms of processing, acetylation occurs almost exclusively in the MAC.

It localises to the nucleus. The protein resides in the chromosome. Core component of nucleosome. Nucleosomes wrap and compact DNA into chromatin, limiting DNA accessibility to the cellular machineries which require DNA as a template. Histones thereby play a central role in transcription regulation, DNA repair, DNA replication and chromosomal stability. DNA accessibility is regulated via a complex set of post-translational modifications of histones, also called histone code, and nucleosome remodeling. This chain is Histone H2B, found in Tetrahymena pyriformis.